A 492-amino-acid polypeptide reads, in one-letter code: Homoserine O-acetyltransferase (492 aa).

In terms of domain architecture, AB hydrolase-1 spans 47-354 (NVILVCHALT…NYGHDAFLLE (308 aa)). Serine 152 serves as the catalytic Nucleophile. Arginine 221 is a substrate binding site. Residues aspartate 315 and histidine 348 contribute to the active site. Aspartate 349 serves as a coordination point for substrate. 2 CBS domains span residues 375–432 (MKLD…FTTL) and 436–492 (LTKN…HRCT).

The protein belongs to the AB hydrolase superfamily. MetX family. In terms of assembly, homodimer.

The protein resides in the cytoplasm. The enzyme catalyses L-homoserine + acetyl-CoA = O-acetyl-L-homoserine + CoA. Its pathway is amino-acid biosynthesis; L-methionine biosynthesis via de novo pathway; O-acetyl-L-homoserine from L-homoserine: step 1/1. Functionally, transfers an acetyl group from acetyl-CoA to L-homoserine, forming acetyl-L-homoserine. The protein is Homoserine O-acetyltransferase of Methanosalsum zhilinae (strain DSM 4017 / NBRC 107636 / OCM 62 / WeN5) (Methanohalophilus zhilinae).